A 438-amino-acid chain; its full sequence is AP-2 complex subunit mu (438 aa).

Residues 177 to 437 (KNEVFLDIVE…ITKAGSYEIR (261 aa)) enclose the MHD domain.

It belongs to the adaptor complexes medium subunit family. Adaptor protein complex 2 (AP-2) is a heterotetramer composed of two large adaptins (alpha-type and beta-type subunits), a medium adaptin (mu-type subunit) and a small adaptin (sigma-type subunit).

The protein localises to the cell membrane. Its subcellular location is the membrane. The protein resides in the coated pit. It is found in the golgi apparatus. It localises to the trans-Golgi network membrane. In terms of biological role, subunit of the adaptor protein complex 2 (AP-2). Adaptor protein complexes function in protein transport via transport vesicles in different membrane traffic pathways. Adaptor protein complexes are vesicle coat components and appear to be involved in cargo selection and vesicle formation. AP-2 is involved in clathrin-dependent endocytosis in which cargo proteins are incorporated into vesicles surrounded by clathrin (clathrin-coated vesicles, CCVs) which are destined for fusion with the early endosome. AP-2 recognizes Y-X-X-Phi endocytosis signal motif within the cytosolic tails of transmembrane cargo molecules. The complex binds polyphosphoinositides. This Arabidopsis thaliana (Mouse-ear cress) protein is AP-2 complex subunit mu (AP2M).